A 241-amino-acid chain; its full sequence is Enterotoxin type H (241 aa).

The first 24 residues, 1–24 (MINKIKILFSFLALLLSFTSYAKA), serve as a signal peptide directing secretion. A disulfide bond links Cys-106 and Cys-116. 3 residues coordinate Zn(2+): Asp-191, His-230, and Asp-232.

Belongs to the staphylococcal/streptococcal toxin family. Interacts with host MHC class II molecules composed of alpha/HLA-DRA and beta/HLA-DRB1 chains. Interacts with host TCR alpha-chain TRAV27. The cofactor is Zn(2+).

Its subcellular location is the secreted. In terms of biological role, staphylococcal enterotoxin that activates the host immune system by binding as unprocessed molecules to major histocompatibility (MHC) complex class II and T-cell receptor (TCR) molecules via their alpha domain, in particular TRAV27. In turn, this ternary complex activates a large number of T-lymphocytes initiating a systemic release of pro-inflammatory cytokines. Also causes the intoxication staphylococcal food poisoning syndrome. The illness characterized by high fever, hypotension, diarrhea, shock, and in some cases death. The chain is Enterotoxin type H (entH) from Staphylococcus aureus.